Reading from the N-terminus, the 170-residue chain is Acetyl-CoA decarbonylase/synthase complex subunit epsilon 2 (170 aa).

Belongs to the CdhB family. As to quaternary structure, heterotetramer of two alpha and two epsilon subunits. The ACDS complex is made up of alpha, epsilon, beta, gamma and delta subunits with a probable stoichiometry of (alpha(2)epsilon(2))(4)-beta(8)-(gamma(1)delta(1))(8).

The protein operates within one-carbon metabolism; methanogenesis from acetate. Functionally, part of a complex that catalyzes the reversible cleavage of acetyl-CoA, allowing growth on acetate as sole source of carbon and energy. The alpha-epsilon subcomponent functions as a carbon monoxide dehydrogenase. The precise role of the epsilon subunit is unclear; it may have a stabilizing role within the alpha(2)epsilon(2) component and/or be involved in electron transfer to FAD during a potential FAD-mediated CO oxidation. The sequence is that of Acetyl-CoA decarbonylase/synthase complex subunit epsilon 2 (cdhB2) from Methanosarcina mazei (strain ATCC BAA-159 / DSM 3647 / Goe1 / Go1 / JCM 11833 / OCM 88) (Methanosarcina frisia).